A 137-amino-acid polypeptide reads, in one-letter code: Small ribosomal subunit protein bS16 (137 aa).

2 stretches are compositionally biased toward basic and acidic residues: residues 80-99 (KSPEEAQKGGMRKGEFKRLQ) and 111-125 (VATEEPKAEEAKEAP). Residues 80-137 (KSPEEAQKGGMRKGEFKRLQAEQAAKAQKKAVATEEPKAEEAKEAPPAESQAAEGKEE) form a disordered region. Positions 126-137 (PAESQAAEGKEE) are enriched in low complexity.

The protein belongs to the bacterial ribosomal protein bS16 family.

This chain is Small ribosomal subunit protein bS16, found in Coxiella burnetii (strain Dugway 5J108-111).